Here is a 1178-residue protein sequence, read N- to C-terminus: Pesticidal crystal protein Cry1Ac (1178 aa).

It belongs to the delta endotoxin family.

Its function is as follows. Promotes colloidosmotic lysis by binding to the midgut epithelial cells of many lepidopteran larvae. The chain is Pesticidal crystal protein Cry1Ac (cry1Ac) from Bacillus thuringiensis subsp. kurstaki.